The primary structure comprises 1252 residues: Guanine nucleotide exchange factor SDC25 (1252 aa).

The 72-residue stretch at 26-97 (QPIDVVECTY…PPSFTRSILN (72 aa)) folds into the SH3 domain. Disordered stretches follow at residues 409–454 (IPAS…DTIW) and 623–648 (LNLD…DEYE). The span at 416–428 (TSCSSETSHHSPS) shows a compositional bias: low complexity. The region spanning 782–914 (SNNRIKGGSK…LLKEVNQKFK (133 aa)) is the N-terminal Ras-GEF domain. In terms of domain architecture, Ras-GEF spans 952 to 1199 (DPVLFATQLT…YQLSLIIEPK (248 aa)). Positions 1201 to 1252 (RKKVVPNSNSNNKSQEKSRDDQTDEGKTSTKKDRFSKFQLHKTKKKAPKVSK) are disordered. Over residues 1214-1236 (SQEKSRDDQTDEGKTSTKKDRFS) the composition is skewed to basic and acidic residues. Over residues 1239 to 1252 (QLHKTKKKAPKVSK) the composition is skewed to basic residues.

Promotes the exchange of Ras-bound GDP by GTP. This is Guanine nucleotide exchange factor SDC25 (SDC25) from Saccharomyces cerevisiae (strain RM11-1a) (Baker's yeast).